The following is a 363-amino-acid chain: NAD(P)H-quinone oxidoreductase subunit 1, chloroplastic (363 aa).

6 helical membrane passes run 30 to 50 (LVPILTLVLAITIGVLVIVWL), 104 to 124 (IAVISIILSYSVIPFSYHLVL), 127 to 147 (LGIGVFLWIAVSSIAPIGLLM), 253 to 273 (FGLFYVASYLNLLVSSLFVTV), 300 to 320 (VFGTTMGMFITLAKTYLFLFI), and 343 to 363 (FLLPISLGNLLLTTSFQLLSL).

The protein belongs to the complex I subunit 1 family. NDH is composed of at least 16 different subunits, 5 of which are encoded in the nucleus.

The protein resides in the plastid. Its subcellular location is the chloroplast thylakoid membrane. It catalyses the reaction a plastoquinone + NADH + (n+1) H(+)(in) = a plastoquinol + NAD(+) + n H(+)(out). It carries out the reaction a plastoquinone + NADPH + (n+1) H(+)(in) = a plastoquinol + NADP(+) + n H(+)(out). Functionally, NDH shuttles electrons from NAD(P)H:plastoquinone, via FMN and iron-sulfur (Fe-S) centers, to quinones in the photosynthetic chain and possibly in a chloroplast respiratory chain. The immediate electron acceptor for the enzyme in this species is believed to be plastoquinone. Couples the redox reaction to proton translocation, and thus conserves the redox energy in a proton gradient. The chain is NAD(P)H-quinone oxidoreductase subunit 1, chloroplastic from Piper cenocladum (Ant piper).